The primary structure comprises 133 residues: Hemoglobin subunit alpha-2 (133 aa).

The Globin domain maps to asparagine 1–arginine 133. Histidine 50 contacts O2. Residue histidine 79 participates in heme b binding.

It belongs to the globin family. In terms of assembly, minor hemoglobin is a heterotetramer of two alpha-2 chains and two beta-2 chains. Red blood cells.

Its function is as follows. Involved in oxygen transport from the lung to the various peripheral tissues. The polypeptide is Hemoglobin subunit alpha-2 (Pleurodeles waltl (Iberian ribbed newt)).